A 429-amino-acid polypeptide reads, in one-letter code: Histidinol dehydrogenase (429 aa).

3 residues coordinate NAD(+): Y130, Q191, and N214. Residues S237, Q259, and H262 each contribute to the substrate site. Positions 259 and 262 each coordinate Zn(2+). Residues E327 and H328 each act as proton acceptor in the active site. H328, D361, E415, and H420 together coordinate substrate. D361 serves as a coordination point for Zn(2+). Residue H420 participates in Zn(2+) binding.

This sequence belongs to the histidinol dehydrogenase family. It depends on Zn(2+) as a cofactor.

It carries out the reaction L-histidinol + 2 NAD(+) + H2O = L-histidine + 2 NADH + 3 H(+). It participates in amino-acid biosynthesis; L-histidine biosynthesis; L-histidine from 5-phospho-alpha-D-ribose 1-diphosphate: step 9/9. Functionally, catalyzes the sequential NAD-dependent oxidations of L-histidinol to L-histidinaldehyde and then to L-histidine. The sequence is that of Histidinol dehydrogenase from Neisseria meningitidis serogroup B (strain ATCC BAA-335 / MC58).